The following is a 230-amino-acid chain: Iron-dependent repressor IdeR (230 aa).

One can recognise an HTH dtxR-type domain in the interval 4-65 (LVDTTEMYLR…VAGNRHLELT (62 aa)).

This sequence belongs to the DtxR/MntR family. As to quaternary structure, homodimer.

Its subcellular location is the cytoplasm. Metal-dependent DNA-binding protein that controls transcription of many genes involved in iron metabolism. The sequence is that of Iron-dependent repressor IdeR (ideR) from Mycobacterium leprae (strain TN).